A 136-amino-acid chain; its full sequence is Transcription antitermination protein NusB (136 aa).

The protein belongs to the NusB family.

Involved in transcription antitermination. Required for transcription of ribosomal RNA (rRNA) genes. Binds specifically to the boxA antiterminator sequence of the ribosomal RNA (rrn) operons. This chain is Transcription antitermination protein NusB, found in Salinispora tropica (strain ATCC BAA-916 / DSM 44818 / JCM 13857 / NBRC 105044 / CNB-440).